The following is a 274-amino-acid chain: 23S rRNA (adenosine(1067)-2'-O)-methyltransferase (274 aa).

S-adenosyl-L-methionine is bound by residues Arg165, Leu195, 218–220 (GSE), 238–240 (IPM), and 247–252 (LNVSVS).

It belongs to the class IV-like SAM-binding methyltransferase superfamily. RNA methyltransferase TsnR/AvirB family. As to quaternary structure, homodimer.

It carries out the reaction adenosine(1067) in 23S rRNA + S-adenosyl-L-methionine = 2'-O-methyladenosine(1067) in 23S rRNA + S-adenosyl-L-homocysteine + H(+). Its function is as follows. Specifically methylates the adenosine-1067 in 23S ribosomal RNA. Confers resistance to antibiotic nosiheptide. This chain is 23S rRNA (adenosine(1067)-2'-O)-methyltransferase, found in Streptomyces actuosus.